A 185-amino-acid polypeptide reads, in one-letter code: Putative manganese efflux pump MntP (185 aa).

6 helical membrane passes run 3 to 23 (PFAVVLLAFSMSVDAFAVSVG), 41 to 61 (AVFGVVEAITPVIGWVAGVAA), 70 to 90 (HWLAFGLLAAVGLHMLYAAVW), 101 to 121 (SFTVLMATAIGTSLDAMAVGV), 123 to 143 (LAFLNVNIVVVATAIGLATFL), and 165 to 185 (AVAGIALFGLGLSILIEHLTA).

It belongs to the MntP (TC 9.B.29) family.

It is found in the cell inner membrane. Probably functions as a manganese efflux pump. In Bradyrhizobium sp. (strain BTAi1 / ATCC BAA-1182), this protein is Putative manganese efflux pump MntP.